The primary structure comprises 571 residues: Proline--tRNA ligase (571 aa).

The protein belongs to the class-II aminoacyl-tRNA synthetase family. ProS type 1 subfamily. In terms of assembly, homodimer.

It localises to the cytoplasm. It carries out the reaction tRNA(Pro) + L-proline + ATP = L-prolyl-tRNA(Pro) + AMP + diphosphate. Catalyzes the attachment of proline to tRNA(Pro) in a two-step reaction: proline is first activated by ATP to form Pro-AMP and then transferred to the acceptor end of tRNA(Pro). As ProRS can inadvertently accommodate and process non-cognate amino acids such as alanine and cysteine, to avoid such errors it has two additional distinct editing activities against alanine. One activity is designated as 'pretransfer' editing and involves the tRNA(Pro)-independent hydrolysis of activated Ala-AMP. The other activity is designated 'posttransfer' editing and involves deacylation of mischarged Ala-tRNA(Pro). The misacylated Cys-tRNA(Pro) is not edited by ProRS. In Actinobacillus pleuropneumoniae serotype 5b (strain L20), this protein is Proline--tRNA ligase.